Consider the following 228-residue polypeptide: MLTRKQRDLLEFIHKRMQRDGVPPSFDEMKEALDLRSKSGIHRLITALEERGFIRRLAHRARAIEIVKMPDAMTGGGFEPRVIDGDRGPAPANAMAVRAAPAREVPVMGQIAAGVPIEAISQVASHVAVPEQMLGAGGNHYALEVKGDSMIDAGINDGDIVVIEEGNTADNGDIVVALVEDHEATLKRLRRKGGMIALEAANPAYETRVFRDDQVKVQGKLVGLIRTY.

The H-T-H motif DNA-binding region spans 26–46 (FDEMKEALDLRSKSGIHRLIT). Residues Ser149 and Lys187 each act as for autocatalytic cleavage activity in the active site.

Belongs to the peptidase S24 family. As to quaternary structure, homodimer.

The enzyme catalyses Hydrolysis of Ala-|-Gly bond in repressor LexA.. Represses a number of genes involved in the response to DNA damage (SOS response), including recA and lexA. In the presence of single-stranded DNA, RecA interacts with LexA causing an autocatalytic cleavage which disrupts the DNA-binding part of LexA, leading to derepression of the SOS regulon and eventually DNA repair. The chain is LexA repressor from Jannaschia sp. (strain CCS1).